A 310-amino-acid polypeptide reads, in one-letter code: p-hydroxybenzoic acid efflux pump subunit AaeA (310 aa).

A helical transmembrane segment spans residues 12–32; sequence AITVVLVILAFIAIFNAWVYY.

This sequence belongs to the membrane fusion protein (MFP) (TC 8.A.1) family.

It localises to the cell inner membrane. In terms of biological role, forms an efflux pump with AaeB. The sequence is that of p-hydroxybenzoic acid efflux pump subunit AaeA from Escherichia coli O17:K52:H18 (strain UMN026 / ExPEC).